The chain runs to 254 residues: L-erythrulose-1-phosphate isomerase (254 aa).

The active-site Electrophile is the histidine 97. Catalysis depends on glutamate 170, which acts as the Proton acceptor. The substrate site is built by glycine 176 and serine 213.

This sequence belongs to the triosephosphate isomerase family. In terms of assembly, homodimer.

The protein localises to the cytoplasm. The catalysed reaction is L-erythrulose 1-phosphate = D-erythrulose 4-phosphate. The protein operates within carbohydrate metabolism; erythritol degradation. In terms of biological role, catalyzes the isomerization of D-erythrulose-4P to L-erythrulose-1P. This is L-erythrulose-1-phosphate isomerase from Mesorhizobium japonicum (strain LMG 29417 / CECT 9101 / MAFF 303099) (Mesorhizobium loti (strain MAFF 303099)).